The following is a 225-amino-acid chain: NAD(P)H-quinone oxidoreductase subunit K, chloroplastic (225 aa).

[4Fe-4S] cluster contacts are provided by Cys-43, Cys-44, Cys-108, and Cys-139.

This sequence belongs to the complex I 20 kDa subunit family. As to quaternary structure, NDH is composed of at least 16 different subunits, 5 of which are encoded in the nucleus. Requires [4Fe-4S] cluster as cofactor.

It is found in the plastid. The protein resides in the chloroplast thylakoid membrane. It catalyses the reaction a plastoquinone + NADH + (n+1) H(+)(in) = a plastoquinol + NAD(+) + n H(+)(out). The catalysed reaction is a plastoquinone + NADPH + (n+1) H(+)(in) = a plastoquinol + NADP(+) + n H(+)(out). In terms of biological role, NDH shuttles electrons from NAD(P)H:plastoquinone, via FMN and iron-sulfur (Fe-S) centers, to quinones in the photosynthetic chain and possibly in a chloroplast respiratory chain. The immediate electron acceptor for the enzyme in this species is believed to be plastoquinone. Couples the redox reaction to proton translocation, and thus conserves the redox energy in a proton gradient. This chain is NAD(P)H-quinone oxidoreductase subunit K, chloroplastic, found in Gossypium barbadense (Sea Island cotton).